A 65-amino-acid chain; its full sequence is MRFSNCFNKFKFCIGTEKKYSFPICTSTYTSFSLFACIWSIFIHISLNKSFIYQKSWYYSFFQNR.

The Cytoplasmic segment spans residues Met-1–Tyr-20. A helical membrane pass occupies residues Ser-21–Ile-43. The Extracellular portion of the chain corresponds to His-44 to Arg-65.

It localises to the host membrane. This is an uncharacterized protein from Acidianus sp. F28 (AFV-2).